Consider the following 2191-residue polypeptide: Genome polyprotein (2191 aa).

A lipid anchor (N-myristoyl glycine; by host) is attached at Gly2. At 2–1501 the chain is on the cytoplasmic side; it reads GAQVSTQKTG…HVSRAFICLQ (1500 aa). The segment at 566–582 is amphipathic alpha-helix; the sequence is FYQNDVQNAVERSIVRV. Catalysis depends on for protease 2A activity residues His878 and Asp896. Zn(2+) is bound by residues Cys913 and Cys915. Catalysis depends on Cys967, which acts as the For protease 2A activity. The Zn(2+) site is built by Cys973 and His975. Residues 1107 to 1179 are membrane-binding; it reads NNGWLKKFTE…EQSAPSQSDQ (73 aa). Residues 1107–1245 form an oligomerization region; sequence NNGWLKKFTE…SPGVGKSVAT (139 aa). Positions 1128–1132 are RNA-binding; sequence AIKIQ. The SF3 helicase domain occupies 1211–1367; it reads EKKMSNYIQF…SMYNQNGKIN (157 aa). Positions 1375, 1387, and 1392 each coordinate Zn(2+). Residues 1375 to 1392 form a C4-type; degenerate zinc finger; that stretch reads CDEECCPVNFKKCCPLVC. The interval 1419–1426 is RNA-binding; that stretch reads EYNHRHSV. The segment at 1430–1435 is oligomerization; sequence LEALFQ. Residues 1502–1517 lie within the membrane without spanning it; that stretch reads ALTTFVSVAGIIYIIY. Residues 1518–2191 lie on the Cytoplasmic side of the membrane; the sequence is KLFAGFQGAY…TLRRKWLDSF (674 aa). Tyr1527 is subject to O-(5'-phospho-RNA)-tyrosine. The region spanning 1547–1725 is the Peptidase C3 domain; that stretch reads GPAFEFAVAM…FSAALLKHYF (179 aa). Catalysis depends on for protease 3C activity residues His1586, Glu1617, and Cys1693. The region spanning 1956 to 2072 is the RdRp catalytic domain; it reads GHLIAFDYSG…SYPWPIDASL (117 aa). The Mg(2+) site is built by Asp1962 and Asp2058.

Belongs to the picornaviruses polyprotein family. In terms of assembly, interacts with capsid protein VP1 and capsid protein VP3 to form heterotrimeric protomers. As to quaternary structure, interacts with capsid protein VP0, and capsid protein VP3 to form heterotrimeric protomers. Five protomers subsequently associate to form pentamers which serve as building blocks for the capsid. Interacts with capsid protein VP2, capsid protein VP3 and capsid protein VP4 following cleavage of capsid protein VP0. Interacts with host CD55 and FCGRT; these interactions promote virus attachment to the host cell and subsequent internalization. Interacts with capsid protein VP1 and capsid protein VP3 in the mature capsid. Interacts with host CD55 and FCGRT; these interactions promote virus attachment to the host cell and subsequent internalization. In terms of assembly, interacts with capsid protein VP0 and capsid protein VP1 to form heterotrimeric protomers. Five protomers subsequently associate to form pentamers which serve as building blocks for the capsid. Interacts with capsid protein VP4 in the mature capsid. Interacts with protein 2C; this interaction may be important for virion morphogenesis. Interacts with host FCGRT; this interaction promotes virus attachment to the host cell and subsequent internalization. As to quaternary structure, interacts with capsid protein VP1 and capsid protein VP3. Homodimer. In terms of assembly, homohexamer; forms a hexameric ring structure with 6-fold symmetry characteristic of AAA+ ATPases. Interacts (via N-terminus) with host RTN3 (via reticulon domain); this interaction is important for viral replication. Interacts with capsid protein VP3; this interaction may be important for virion morphogenesis. As to quaternary structure, interacts with protein 3CD. Homodimer. Interacts with host GBF1. Interacts (via GOLD domain) with host ACBD3 (via GOLD domain); this interaction allows the formation of a viral protein 3A/ACBD3 heterotetramer with a 2:2 stoichiometry, which will stimulate the recruitment of host PI4KB in order to synthesize PI4P at the viral RNA replication sites. In terms of assembly, interacts with RNA-directed RNA polymerase. As to quaternary structure, interacts with protein 3AB and with RNA-directed RNA polymerase. Interacts with Viral protein genome-linked and with protein 3CD. It depends on Mg(2+) as a cofactor. In terms of processing, specific enzymatic cleavages in vivo by the viral proteases yield processing intermediates and the mature proteins. Post-translationally, myristoylation is required for the formation of pentamers during virus assembly. Further assembly of 12 pentamers and a molecule of genomic RNA generates the provirion. During virion maturation, immature virions are rendered infectious following cleavage of VP0 into VP4 and VP2. This maturation seems to be an autocatalytic event triggered by the presence of RNA in the capsid and it is followed by a conformational change infectious virion. In terms of processing, myristoylation is required during RNA encapsidation and formation of the mature virus particle. Post-translationally, VPg is uridylylated by the polymerase into VPg-pUpU. This acts as a nucleotide-peptide primer for the genomic RNA replication.

It is found in the virion. Its subcellular location is the host cytoplasm. The protein localises to the host cytoplasmic vesicle membrane. The protein resides in the host nucleus. It carries out the reaction a ribonucleoside 5'-triphosphate + H2O = a ribonucleoside 5'-diphosphate + phosphate + H(+). The catalysed reaction is Selective cleavage of Tyr-|-Gly bond in the picornavirus polyprotein.. The enzyme catalyses RNA(n) + a ribonucleoside 5'-triphosphate = RNA(n+1) + diphosphate. It catalyses the reaction Selective cleavage of Gln-|-Gly bond in the poliovirus polyprotein. In other picornavirus reactions Glu may be substituted for Gln, and Ser or Thr for Gly.. Its activity is regulated as follows. Replication or transcription is subject to high level of random mutations by the nucleotide analog ribavirin. Forms an icosahedral capsid of pseudo T=3 symmetry with capsid proteins VP2 and VP3. The capsid is 300 Angstroms in diameter, composed of 60 copies of each capsid protein and enclosing the viral positive strand RNA genome. Capsid protein VP1 mainly forms the vertices of the capsid. Capsid protein VP1 interacts with host cell receptor to provide virion attachment to target host cells. This attachment induces virion internalization. Tyrosine kinases are probably involved in the entry process. After binding to its receptor, the capsid undergoes conformational changes. Capsid protein VP1 N-terminus (that contains an amphipathic alpha-helix) and capsid protein VP4 are externalized. Together, they shape a pore in the host membrane through which viral genome is translocated to host cell cytoplasm. In terms of biological role, forms an icosahedral capsid of pseudo T=3 symmetry with capsid proteins VP2 and VP3. The capsid is 300 Angstroms in diameter, composed of 60 copies of each capsid protein and enclosing the viral positive strand RNA genome. Its function is as follows. Lies on the inner surface of the capsid shell. After binding to the host receptor, the capsid undergoes conformational changes. Capsid protein VP4 is released, Capsid protein VP1 N-terminus is externalized, and together, they shape a pore in the host membrane through which the viral genome is translocated into the host cell cytoplasm. Functionally, component of immature procapsids, which is cleaved into capsid proteins VP4 and VP2 after maturation. Allows the capsid to remain inactive before the maturation step. Cysteine protease that cleaves viral polyprotein and specific host proteins. It is responsible for the autocatalytic cleavage between the P1 and P2 regions, which is the first cleavage occurring in the polyprotein. Also cleaves the host translation initiation factor EIF4G1, in order to shut down the capped cellular mRNA translation. Inhibits the host nucleus-cytoplasm protein and RNA trafficking by cleaving host members of the nuclear pores. Counteracts stress granule formation probably by antagonizing its assembly or promoting its dissassembly. In terms of biological role, plays an essential role in the virus replication cycle by acting as a viroporin. Creates a pore in the host endoplasmic reticulum and as a consequence releases Ca2+ in the cytoplasm of infected cell. In turn, high levels of cytoplasmic calcium may trigger membrane trafficking and transport of viral ER-associated proteins to viroplasms, sites of viral genome replication. Its function is as follows. Induces and associates with structural rearrangements of intracellular membranes. Displays RNA-binding, nucleotide binding and NTPase activities. May play a role in virion morphogenesis and viral RNA encapsidation by interacting with the capsid protein VP3. Functionally, localizes the viral replication complex to the surface of membranous vesicles. Together with protein 3CD binds the Cis-Active RNA Element (CRE) which is involved in RNA synthesis initiation. Acts as a cofactor to stimulate the activity of 3D polymerase, maybe through a nucleid acid chaperone activity. Localizes the viral replication complex to the surface of membranous vesicles. It inhibits host cell endoplasmic reticulum-to-Golgi apparatus transport and causes the disassembly of the Golgi complex, possibly through GBF1 interaction. This would result in depletion of MHC, trail receptors and IFN receptors at the host cell surface. Plays an essential role in viral RNA replication by recruiting ACBD3 and PI4KB at the viral replication sites, thereby allowing the formation of the rearranged membranous structures where viral replication takes place. In terms of biological role, acts as a primer for viral RNA replication and remains covalently bound to viral genomic RNA. VPg is uridylylated prior to priming replication into VPg-pUpU. The oriI viral genomic sequence may act as a template for this. The VPg-pUpU is then used as primer on the genomic RNA poly(A) by the RNA-dependent RNA polymerase to replicate the viral genome. During genome replication, the VPg-RNA linkage is removed by the host TDP2, thereby accelerating replication. During the late stage of the replication cycle, host TDP2 is excluded from sites of viral RNA synthesis and encapsidation, allowing for the generation of progeny virions. Its function is as follows. Involved in the viral replication complex and viral polypeptide maturation. It exhibits protease activity with a specificity and catalytic efficiency that is different from protease 3C. Protein 3CD binds to the 5'UTR of the viral genome. Functionally, replicates the viral genomic RNA on the surface of intracellular membranes. May form linear arrays of subunits that propagate along a strong head-to-tail interaction called interface-I. Covalently attaches UMP to a tyrosine of VPg, which is used to prime RNA synthesis. The positive stranded RNA genome is first replicated at virus induced membranous vesicles, creating a dsRNA genomic replication form. This dsRNA is then used as template to synthesize positive stranded RNA genomes. ss(+)RNA genomes are either translated, replicated or encapsidated. Major viral protease that mediates proteolytic processing of the polyprotein. Cleaves host EIF5B, contributing to host translation shutoff. Also cleaves host PABPC1, contributing to host translation shutoff. Cleaves host NLRP1, triggers host N-glycine-mediated degradation of the autoinhibitory NLRP1 N-terminal fragment. In Echovirus 6 (strain Charles), this protein is Genome polyprotein.